A 444-amino-acid polypeptide reads, in one-letter code: Methylenetetrahydrofolate--tRNA-(uracil-5-)-methyltransferase TrmFO (444 aa).

Position 10 to 15 (10 to 15) interacts with FAD; that stretch reads GAGLAG.

It belongs to the MnmG family. TrmFO subfamily. It depends on FAD as a cofactor.

The protein localises to the cytoplasm. It carries out the reaction uridine(54) in tRNA + (6R)-5,10-methylene-5,6,7,8-tetrahydrofolate + NADH + H(+) = 5-methyluridine(54) in tRNA + (6S)-5,6,7,8-tetrahydrofolate + NAD(+). The enzyme catalyses uridine(54) in tRNA + (6R)-5,10-methylene-5,6,7,8-tetrahydrofolate + NADPH + H(+) = 5-methyluridine(54) in tRNA + (6S)-5,6,7,8-tetrahydrofolate + NADP(+). Functionally, catalyzes the folate-dependent formation of 5-methyl-uridine at position 54 (M-5-U54) in all tRNAs. This chain is Methylenetetrahydrofolate--tRNA-(uracil-5-)-methyltransferase TrmFO, found in Streptococcus pneumoniae serotype 4 (strain ATCC BAA-334 / TIGR4).